Reading from the N-terminus, the 94-residue chain is Small ribosomal subunit protein uS19 (94 aa).

Residues 73–94 are disordered; that stretch reads EFAPTRTYRGHGKDAERTTRRR. Over residues 83–94 the composition is skewed to basic and acidic residues; the sequence is HGKDAERTTRRR.

The protein belongs to the universal ribosomal protein uS19 family.

Functionally, protein S19 forms a complex with S13 that binds strongly to the 16S ribosomal RNA. The protein is Small ribosomal subunit protein uS19 of Thermomicrobium roseum (strain ATCC 27502 / DSM 5159 / P-2).